A 374-amino-acid polypeptide reads, in one-letter code: Phosphate acyltransferase (374 aa).

Residues 323–374 (AEMVDPREPESNPRRRTRPLQVYSGSGPEVLPLGSLERTSSRCPEPVEDAQP) form a disordered region. The segment covering 326–335 (VDPREPESNP) has biased composition (basic and acidic residues).

This sequence belongs to the PlsX family. Homodimer. Probably interacts with PlsY.

It localises to the cytoplasm. The catalysed reaction is a fatty acyl-[ACP] + phosphate = an acyl phosphate + holo-[ACP]. The protein operates within lipid metabolism; phospholipid metabolism. Its function is as follows. Catalyzes the reversible formation of acyl-phosphate (acyl-PO(4)) from acyl-[acyl-carrier-protein] (acyl-ACP). This enzyme utilizes acyl-ACP as fatty acyl donor, but not acyl-CoA. The protein is Phosphate acyltransferase of Synechococcus sp. (strain JA-2-3B'a(2-13)) (Cyanobacteria bacterium Yellowstone B-Prime).